The sequence spans 729 residues: Fatty acid oxidation complex subunit alpha (729 aa).

Residues 1-189 are enoyl-CoA hydratase/isomerase; sequence MLYKGDTLYL…KIGLVDGVVA (189 aa). Aspartate 296 contacts substrate. The segment at 311 to 729 is 3-hydroxyacyl-CoA dehydrogenase; sequence ETPKHAAVLG…ARPVGALKTA (419 aa). NAD(+) is bound by residues methionine 324, aspartate 343, 400 to 402, lysine 407, and serine 429; that span reads VVE. Catalysis depends on histidine 450, which acts as the For 3-hydroxyacyl-CoA dehydrogenase activity. Asparagine 453 contacts NAD(+). Substrate-binding residues include asparagine 500 and tyrosine 660.

In the N-terminal section; belongs to the enoyl-CoA hydratase/isomerase family. It in the C-terminal section; belongs to the 3-hydroxyacyl-CoA dehydrogenase family. As to quaternary structure, heterotetramer of two alpha chains (FadB) and two beta chains (FadA).

It carries out the reaction a (3S)-3-hydroxyacyl-CoA + NAD(+) = a 3-oxoacyl-CoA + NADH + H(+). The catalysed reaction is a (3S)-3-hydroxyacyl-CoA = a (2E)-enoyl-CoA + H2O. It catalyses the reaction a 4-saturated-(3S)-3-hydroxyacyl-CoA = a (3E)-enoyl-CoA + H2O. The enzyme catalyses (3S)-3-hydroxybutanoyl-CoA = (3R)-3-hydroxybutanoyl-CoA. It carries out the reaction a (3Z)-enoyl-CoA = a 4-saturated (2E)-enoyl-CoA. The catalysed reaction is a (3E)-enoyl-CoA = a 4-saturated (2E)-enoyl-CoA. The protein operates within lipid metabolism; fatty acid beta-oxidation. In terms of biological role, involved in the aerobic and anaerobic degradation of long-chain fatty acids via beta-oxidation cycle. Catalyzes the formation of 3-oxoacyl-CoA from enoyl-CoA via L-3-hydroxyacyl-CoA. It can also use D-3-hydroxyacyl-CoA and cis-3-enoyl-CoA as substrate. The chain is Fatty acid oxidation complex subunit alpha from Klebsiella pneumoniae subsp. pneumoniae (strain ATCC 700721 / MGH 78578).